The chain runs to 119 residues: Large ribosomal subunit protein bL20 (119 aa).

The protein belongs to the bacterial ribosomal protein bL20 family.

Binds directly to 23S ribosomal RNA and is necessary for the in vitro assembly process of the 50S ribosomal subunit. It is not involved in the protein synthesizing functions of that subunit. The protein is Large ribosomal subunit protein bL20 of Azoarcus sp. (strain BH72).